Here is a 104-residue protein sequence, read N- to C-terminus: Flagellar hook-basal body complex protein FliE (104 aa).

The protein belongs to the FliE family.

Its subcellular location is the bacterial flagellum basal body. This chain is Flagellar hook-basal body complex protein FliE, found in Escherichia coli O6:K15:H31 (strain 536 / UPEC).